The primary structure comprises 281 residues: Sorbose reductase SOU1 (281 aa).

Residues I47, K74, and N119 each contribute to the NADP(+) site. Catalysis depends on proton donor residues S173 and Y188. NADP(+) contacts are provided by Y188, K192, I221, and T223. The Lowers pKa of active site Tyr role is filled by K192.

The protein belongs to the short-chain dehydrogenases/reductases (SDR) family. As to quaternary structure, homotetramer.

It catalyses the reaction D-sorbitol + NADP(+) = keto-L-sorbose + NADPH + H(+). It functions in the pathway carbohydrate degradation; L-sorbose degradation. Its function is as follows. Catalyzes the NADP dependent reduction of L-sorbose to D-glucitol. Can also convert fructose to mannitol, but less efficiently. This chain is Sorbose reductase SOU1 (SOU1), found in Candida albicans (strain SC5314 / ATCC MYA-2876) (Yeast).